The following is a 474-amino-acid chain: Glutamate--tRNA ligase (474 aa).

Residues 9-19 (PSPTGYLHVGG) carry the 'HIGH' region motif. The short motif at 240-244 (KLSKR) is the 'KMSKS' region element. K243 is an ATP binding site.

Belongs to the class-I aminoacyl-tRNA synthetase family. Glutamate--tRNA ligase type 1 subfamily. As to quaternary structure, monomer.

The protein localises to the cytoplasm. The catalysed reaction is tRNA(Glu) + L-glutamate + ATP = L-glutamyl-tRNA(Glu) + AMP + diphosphate. Functionally, catalyzes the attachment of glutamate to tRNA(Glu) in a two-step reaction: glutamate is first activated by ATP to form Glu-AMP and then transferred to the acceptor end of tRNA(Glu). This Vibrio vulnificus (strain YJ016) protein is Glutamate--tRNA ligase.